We begin with the raw amino-acid sequence, 580 residues long: Laccase-6 (580 aa).

Residues 1-22 (MSCSWMIPVFAILAFVASAAQA) form the signal peptide. 2 Plastocyanin-like domains span residues 30-148 (NVAT…PRRA) and 158-317 (EEKT…YVDA). 2 N-linked (GlcNAc...) asparagine glycosylation sites follow: Asn-44 and Asn-78. 4 residues coordinate Cu cation: His-82, His-84, His-127, and His-129. Asn-306, Asn-335, Asn-385, Asn-397, and Asn-462 each carry an N-linked (GlcNAc...) asparagine glycan. The Plastocyanin-like 3 domain occupies 424–564 (DFPDQPPVAF…AMVFEVESGP (141 aa)). The Cu cation site is built by His-480, His-483, His-485, His-543, Cys-544, His-545, and His-549.

It belongs to the multicopper oxidase family. Cu cation is required as a cofactor.

It localises to the secreted. The protein resides in the extracellular space. It is found in the apoplast. The enzyme catalyses 4 hydroquinone + O2 = 4 benzosemiquinone + 2 H2O. In terms of biological role, lignin degradation and detoxification of lignin-derived products. The chain is Laccase-6 (LAC6) from Oryza sativa subsp. japonica (Rice).